Here is a 170-residue protein sequence, read N- to C-terminus: Sec-independent protein translocase protein TATA, chloroplastic (170 aa).

The N-terminal 61 residues, 1–61 (MGIPVVVPVA…GGSGGDLAAV (61 aa)), are a transit peptide targeting the chloroplast. Over 62–84 (AASVAARPRRAGSGGGGALGCKC) the chain is Lumenal. A helical transmembrane segment spans residues 85–105 (LFGLGVPELAVIAGVAALVFG). Residues 106–170 (PKQLPEIGRS…LEASSSKESA (65 aa)) lie on the Stromal side of the membrane. Over residues 130–139 (FETELKKEPG) the composition is skewed to basic and acidic residues. The interval 130-170 (FETELKKEPGEGGDQPPPATPTAVSGGEEKGLEASSSKESA) is disordered.

The protein belongs to the TatA/E family. As to quaternary structure, in thylakoid membranes, TATC and TATB form a large receptor complex, containing about eight TATC-TATB pairs, which binds the precursor protein. Twin arginine signal peptide promotes pH-triggered docking of TATA oligomers to TATC-TATB receptor complex, inducing a conformational switch of TATA that results in activation of the translocase. TATA dissociates from TATC-TATB upon completion of translocation.

Its subcellular location is the plastid. It localises to the chloroplast thylakoid membrane. Its function is as follows. Part of the twin-arginine translocation (Tat) system that transports large folded proteins containing a characteristic twin-arginine motif in their signal peptide across the thylakoid membrane. Involved in delta pH-dependent protein transport required for chloroplast development, especially thylakoid membrane formation. TATC and TATB mediate precursor recognition, whereas TATA facilitates translocation. This is Sec-independent protein translocase protein TATA, chloroplastic from Zea mays (Maize).